We begin with the raw amino-acid sequence, 1099 residues long: R3H domain-containing protein 1 (1099 aa).

The tract at residues Ser111–Thr146 is disordered. Residues Phe112–Ser142 show a composition bias toward basic and acidic residues. An R3H domain is found at Arg168–Thr231. 2 positions are modified to phosphoserine: Ser187 and Ser262. Positions Arg232–Ser302 constitute an SUZ domain. Residues Asp267–Glu287 are disordered. Position 302 is a phosphoserine (Ser302). Residues Arg331 to Arg370 form a disordered region. Polar residues-rich tracts occupy residues Gly338–Glu349 and Trp360–Arg370. Phosphoserine occurs at positions 380, 381, and 393. Disordered stretches follow at residues Val387–Gly439, Gln490–His537, Tyr583–Ser625, and Glu797–Pro825. The segment covering Gly391 to Ser422 has biased composition (low complexity). Composition is skewed to pro residues over residues Pro519 to Gln532 and Ala588 to Pro611. Over residues Glu797–Gln817 the composition is skewed to polar residues. The residue at position 929 (Arg929) is an Asymmetric dimethylarginine; alternate. Arg929 bears the Omega-N-methylarginine; alternate mark. A disordered region spans residues Pro941–Gly977. A compositionally biased stretch (basic residues) spans His960 to Lys969. Ser973 carries the post-translational modification Phosphoserine.

The polypeptide is R3H domain-containing protein 1 (R3HDM1) (Homo sapiens (Human)).